A 130-amino-acid chain; its full sequence is MTANTSTSDTLAHLARVIESRLPQNGGDPDTSYVARLLHKGPNAFLKKIGEEATEVVMAAKDADNGGDKTKVVYEVADLWFHCMIALAHYGLSPADVVVELDRRAGTSGIEEKAMRKVTAREDEQPGAAQ.

The protein belongs to the PRA-PH family.

Its subcellular location is the cytoplasm. It catalyses the reaction 1-(5-phospho-beta-D-ribosyl)-ATP + H2O = 1-(5-phospho-beta-D-ribosyl)-5'-AMP + diphosphate + H(+). The protein operates within amino-acid biosynthesis; L-histidine biosynthesis; L-histidine from 5-phospho-alpha-D-ribose 1-diphosphate: step 2/9. The polypeptide is Phosphoribosyl-ATP pyrophosphatase (Albidiferax ferrireducens (strain ATCC BAA-621 / DSM 15236 / T118) (Rhodoferax ferrireducens)).